We begin with the raw amino-acid sequence, 272 residues long: HMP-PP phosphatase (272 aa).

Residue Asp-8 is the Nucleophile of the active site. Mg(2+)-binding residues include Asp-8, Asp-10, and Asp-212.

Belongs to the HAD-like hydrolase superfamily. Cof family. It depends on Mg(2+) as a cofactor.

The catalysed reaction is 4-amino-2-methyl-5-(diphosphooxymethyl)pyrimidine + H2O = 4-amino-2-methyl-5-(phosphooxymethyl)pyrimidine + phosphate + H(+). Functionally, catalyzes the hydrolysis of 4-amino-2-methyl-5-hydroxymethylpyrimidine pyrophosphate (HMP-PP) to 4-amino-2-methyl-5-hydroxymethylpyrimidine phosphate (HMP-P). This is HMP-PP phosphatase from Klebsiella pneumoniae (strain 342).